Here is a 182-residue protein sequence, read N- to C-terminus: Putative manganese efflux pump MntP 1 (182 aa).

Transmembrane regions (helical) follow at residues 4–24, 42–62, 63–83, 103–123, 127–147, and 162–182; these read LLLLSLALSMDAFAVSLGLGA, IFQGIMPLLGFFVGVTFIAFI, SAFDHYLAFGILALIGAKMIY, LILSIATSIDALAAGVSLHLI, VFLSCTIIAFTTFLLSYLGVL, and ILGGVILIGIGSKILLEHLFF.

It belongs to the MntP (TC 9.B.29) family.

It localises to the cell inner membrane. Its function is as follows. Probably functions as a manganese efflux pump. This is Putative manganese efflux pump MntP 1 from Wolinella succinogenes (strain ATCC 29543 / DSM 1740 / CCUG 13145 / JCM 31913 / LMG 7466 / NCTC 11488 / FDC 602W) (Vibrio succinogenes).